An 832-amino-acid polypeptide reads, in one-letter code: SID1 transmembrane family member 2 (832 aa).

The first 15 residues, 1–15 (MIAWRLPLCVLLVAA), serve as a signal peptide directing secretion. The Extracellular portion of the chain corresponds to 16–293 (VESHLGALGP…VSQAVTSEAY (278 aa)). N-linked (GlcNAc...) asparagine glycosylation is found at Asn27, Asn54, Asn60, Asn123, Asn141, and Asn165. A helical membrane pass occupies residues 294-314 (VGGMLFCLGIFLSFYLLTVLL). The Cytoplasmic portion of the chain corresponds to 315 to 447 (ACWENWRQRK…DKRVLRKKYQ (133 aa)). Ser401, Ser403, and Ser404 each carry phosphoserine. The helical transmembrane segment at 448-468 (IYFWNIATIAVFYALPVVQLV) threads the bilayer. Residues 469–499 (ITYQTVVNVTGNQDICYYNFLCAHPLGNLSA) lie on the Extracellular side of the membrane. N-linked (GlcNAc...) asparagine glycans are attached at residues Asn476 and Asn496. Residues 500–520 (FNNILSNLGYILLGLLFLLII) traverse the membrane as a helical segment. The Cytoplasmic portion of the chain corresponds to 521–546 (LQREINHNRALLRNDLYALECGIPKH). The helical transmembrane segment at 547–567 (FGLFYAMGTALMMEGLLSACY) threads the bilayer. The Extracellular segment spans residues 568 to 605 (HVCPNYTNFQFDTSFMYMIAGLCMLKLYQKRHPDINAS). N-linked (GlcNAc...) asparagine glycans are attached at residues Asn572 and Asn603. Residues 606–626 (AYSAYACLAIVIFFSVLGVVF) form a helical membrane-spanning segment. At 627-631 (GKGNT) the chain is on the cytoplasmic side. A helical membrane pass occupies residues 632–652 (AFWIVFSVIHIISTLLLSTQL). Over 653–688 (YYMGRWKLDSGIFRRILHVLYTDCIRQCSGPLYTDR) the chain is Extracellular. Residues 689–709 (MVLLVMGNIINWSLAAYGLIM) form a helical membrane-spanning segment. Residues 710–715 (RPNDFA) lie on the Cytoplasmic side of the membrane. A helical transmembrane segment spans residues 716 to 736 (SYLLAIGICNLLLYFAFYIIM). At 737 to 746 (KLRSGERIKL) the chain is on the extracellular side. Residues 747–767 (IPLLCIVCTSVVWGFALFFFF) form a helical membrane-spanning segment. Residues 768 to 796 (QGLSTWQKTPAESREHNRDCILLDFFDDH) lie on the Cytoplasmic side of the membrane. Residues 797–817 (DIWHFLSSIAMFGSFLVLLTL) traverse the membrane as a helical segment. The Extracellular portion of the chain corresponds to 818–832 (DDDLDTVQRDKIYVF).

This sequence belongs to the SID1 family. Interacts with adapter protein complex 1 (AP-1) and AP-2, but not AP-3 and AP-4. Interacts with LAMP2. In terms of processing, glycosylated. As to expression, highly expressed in the liver, brain, kidney and intestine (at protein level).

It is found in the lysosome membrane. It localises to the cell membrane. Mediates the translocation of RNA and DNA across the lysosomal membrane during RNA and DNA autophagy (RDA), a process in which RNA or DNA is directly imported into lysosomes in an ATP-dependent manner, and degraded. Involved in the uptake of single-stranded oligonucleotides by living cells, a process called gymnosis. In vitro, mediates the uptake of linear DNA more efficiently than that of circular DNA, but exhibits similar uptake efficacy toward RNA and DNA. Binds long double-stranded RNA (dsRNA) (500 - 700 base pairs), but not dsRNA shorter than 100 bp. This chain is SID1 transmembrane family member 2 (Sidt2), found in Rattus norvegicus (Rat).